The chain runs to 522 residues: Probable cytosolic Fe-S cluster assembly factor narfl (522 aa).

[4Fe-4S] cluster contacts are provided by cysteine 26, cysteine 73, cysteine 76, cysteine 79, cysteine 205, cysteine 281, cysteine 439, and cysteine 443.

This sequence belongs to the NARF family.

In terms of biological role, component of the cytosolic iron-sulfur (Fe/S) protein assembly machinery. Required for maturation of extramitochondrial Fe/S proteins. In Dictyostelium discoideum (Social amoeba), this protein is Probable cytosolic Fe-S cluster assembly factor narfl (narfl).